The primary structure comprises 229 residues: UPF0758 protein Mbur_0382 (229 aa).

Residues Lys-106–Ile-228 form the MPN domain. Zn(2+) is bound by residues His-177, His-179, and Asp-190. A JAMM motif motif is present at residues His-177–Asp-190.

This sequence belongs to the UPF0758 family.

This chain is UPF0758 protein Mbur_0382, found in Methanococcoides burtonii (strain DSM 6242 / NBRC 107633 / OCM 468 / ACE-M).